We begin with the raw amino-acid sequence, 593 residues long: Ribonuclease Y (593 aa).

The chain crosses the membrane as a helical span at residues 6–26 (ILLMYLIVGLLTALTVLIFVF). The 61-residue stretch at 218 to 278 (DPIKVKKVTD…IKLEVAYNAL (61 aa)) folds into the KH domain. Residues 354–464 (VLTHSIEAAQ…TKIADFLSAA (111 aa)) enclose the HD domain.

This sequence belongs to the RNase Y family.

The protein localises to the cell membrane. Endoribonuclease that initiates mRNA decay. In Mycoplasmoides gallisepticum (strain R(low / passage 15 / clone 2)) (Mycoplasma gallisepticum), this protein is Ribonuclease Y.